The primary structure comprises 261 residues: Putative hydro-lyase SAR11_0660 (261 aa).

This sequence belongs to the D-glutamate cyclase family.

The protein is Putative hydro-lyase SAR11_0660 of Pelagibacter ubique (strain HTCC1062).